Reading from the N-terminus, the 235-residue chain is N-alpha-acetyltransferase 10 (235 aa).

Methionine 1 is subject to N-acetylmethionine. The interval 1–58 (MNIRNARPEDLMNMQHCNLLCLPENYQMKYYFYHGLSWPQLSYIAEDENGKIVGYVLA) is interaction with NAA15. The N-acetyltransferase domain occupies 1 to 152 (MNIRNARPED…DAYAMKRDLT (152 aa)). An N6-acetyllysine; by autocatalysis modification is found at lysine 136. The span at 196 to 213 (EEKGLAAEDSGGDSKDLS) shows a compositional bias: basic and acidic residues. The disordered stretch occupies residues 196 to 235 (EEKGLAAEDSGGDSKDLSEVSETTESTDVKDSSEASDSAS). Phosphoserine is present on serine 205. Serine 209 carries the post-translational modification Phosphoserine; by IKKB. Phosphoserine occurs at positions 213 and 216.

This sequence belongs to the acetyltransferase family. ARD1 subfamily. In terms of assembly, component of the N-terminal acetyltransferase A complex (also called the NatA complex) composed of NAA10 and NAA15. Interacts with NAA15. Component of the N-terminal acetyltransferase A (NatA)/HYPK complex at least composed of NAA10, NAA15 and HYPK, which has N-terminal acetyltransferase activity. In complex with NAA15, interacts with HYPK. Component of the N-terminal acetyltransferase E (NatE) complex at least composed of NAA10, NAA15 and NAA50. Within the complex interacts with NAA15; the interaction is required for binding to NAAT50. Interacts with NAAT50. The interaction of the NatA complex with NAA50 reduces the acetylation activity of the NatA complex. Component of the N-terminal acetyltransferase E (NatE)/HYPK complex at least composed of NAA10, NAA15, NAA50 and HYPK. In complex with NAA15, interacts with HYPK; the interaction with HYPK reduces the capacity of the NatA complex to interact with NAA50. Interacts with HIF1A (via its ODD domain); the interaction increases HIF1A protein stability during normoxia, an down-regulates it when induced by hypoxia. Interacts with the ribosome. Binds to MYLK. Interacts with NAA16. Interacts (via its C-terminal domain) with TSC2, leading to its acetylation. Interacts with IKBKB. Interacts with HSPA1A and HSPA1B leading to its acetylation. In terms of processing, cleaved by caspases during apoptosis. Post-translationally, phosphorylation by IKBKB/IKKB at Ser-209 destabilises NAA10 and promotes its proteasome-mediated degradation. Autoacetylated at Lys-136 which stimulates its catalytic activity. In terms of tissue distribution, ubiquitous.

It is found in the cytoplasm. It localises to the nucleus. It carries out the reaction N-terminal glycyl-[protein] + acetyl-CoA = N-terminal N(alpha)-acetylglycyl-[protein] + CoA + H(+). The enzyme catalyses N-terminal L-alanyl-[protein] + acetyl-CoA = N-terminal N(alpha)-acetyl-L-alanyl-[protein] + CoA + H(+). It catalyses the reaction N-terminal L-seryl-[protein] + acetyl-CoA = N-terminal N(alpha)-acetyl-L-seryl-[protein] + CoA + H(+). The catalysed reaction is N-terminal L-valyl-[protein] + acetyl-CoA = N-terminal N(alpha)-acetyl-L-valyl-[protein] + CoA + H(+). It carries out the reaction N-terminal L-cysteinyl-[protein] + acetyl-CoA = N-terminal N(alpha)-acetyl-L-cysteinyl-[protein] + CoA + H(+). The enzyme catalyses N-terminal L-threonyl-[protein] + acetyl-CoA = N-terminal N(alpha)-acetyl-L-threonyl-[protein] + CoA + H(+). Functionally, catalytic subunit of the N-terminal acetyltransferase A (NatA) complex which displays alpha (N-terminal) acetyltransferase activity. Acetylates amino termini that are devoid of initiator methionine. The alpha (N-terminal) acetyltransferase activity may be important for vascular, hematopoietic and neuronal growth and development. Without NAA15, displays epsilon (internal) acetyltransferase activity towards HIF1A, thereby promoting its degradation. Represses MYLK kinase activity by acetylation, and thus represses tumor cell migration. Acetylates, and stabilizes TSC2, thereby repressing mTOR activity and suppressing cancer development. Acetylates HSPA1A and HSPA1B at 'Lys-77' which enhances its chaperone activity and leads to preferential binding to co-chaperone HOPX. Acetylates HIST1H4A. Acts as a negative regulator of sister chromatid cohesion during mitosis. This Mus musculus (Mouse) protein is N-alpha-acetyltransferase 10 (Naa10).